We begin with the raw amino-acid sequence, 225 residues long: Cbp/p300-interacting transactivator 2 (225 aa).

Belongs to the CITED family.

The protein resides in the nucleus. Functionally, transcriptional coactivator or corepressor of the p300/CBP-mediated transcription complex. May be involved in sex determination, early gonad development, left-right patterning during embryogenesis and differentiation of the adrenal cortex. The polypeptide is Cbp/p300-interacting transactivator 2 (cited2) (Xenopus laevis (African clawed frog)).